The chain runs to 249 residues: tRNA (guanine-N(1)-)-methyltransferase (249 aa).

Residues glycine 113 and 133–138 (IGDFVL) each bind S-adenosyl-L-methionine.

It belongs to the RNA methyltransferase TrmD family. As to quaternary structure, homodimer.

It is found in the cytoplasm. It catalyses the reaction guanosine(37) in tRNA + S-adenosyl-L-methionine = N(1)-methylguanosine(37) in tRNA + S-adenosyl-L-homocysteine + H(+). Functionally, specifically methylates guanosine-37 in various tRNAs. In Aliivibrio salmonicida (strain LFI1238) (Vibrio salmonicida (strain LFI1238)), this protein is tRNA (guanine-N(1)-)-methyltransferase.